Consider the following 248-residue polypeptide: Coproheme decarboxylase (248 aa).

Fe-coproporphyrin III contacts are provided by residues Arg130, 144 to 148, His171, Gln184, and Ser222; that span reads YPMDK. Tyr144 is an active-site residue.

Belongs to the ChdC family. Type 1 subfamily. Requires Fe-coproporphyrin III as cofactor.

The enzyme catalyses Fe-coproporphyrin III + 2 H2O2 + 2 H(+) = heme b + 2 CO2 + 4 H2O. The catalysed reaction is Fe-coproporphyrin III + H2O2 + H(+) = harderoheme III + CO2 + 2 H2O. It carries out the reaction harderoheme III + H2O2 + H(+) = heme b + CO2 + 2 H2O. It participates in porphyrin-containing compound metabolism; protoheme biosynthesis. In terms of biological role, involved in coproporphyrin-dependent heme b biosynthesis. Catalyzes the decarboxylation of Fe-coproporphyrin III (coproheme) to heme b (protoheme IX), the last step of the pathway. The reaction occurs in a stepwise manner with a three-propionate intermediate. The sequence is that of Coproheme decarboxylase from Geobacillus sp. (strain WCH70).